Reading from the N-terminus, the 265-residue chain is ETS-related transcription factor Elf-5 (265 aa).

The PNT domain maps to 43–129 (YPAFEHQTAC…FILQNIRTQG (87 aa)). A DNA-binding region (ETS) is located at residues 173-254 (SHLWEFVRDL…VDRRLVYKFG (82 aa)).

It belongs to the ETS family. In terms of tissue distribution, expressed exclusively in tissues with a high content of epithelial cells. Highly expressed in salivary gland, mammary gland, kidney and prostate. Weakly expressed in placenta and lung. Isoform 1 and isoform 2 are differentially expressed in different tissues. In the kidney, only isoform 1 was expressed, while prostate expressed both isoforms, with levels of isoform 2 being higher. Expression is up-regulated during keratinocyte differentiation. Several epithelial carcinoma cell lines showed lack of expression.

It is found in the nucleus. Transcriptionally activator that may play a role in regulating the later stages of keratinocytes terminal differentiation. In terms of biological role, isoform 2 binds to DNA sequences containing the consensus nucleotide core sequence GGA[AT]. Transcriptionally activates SPRR2A and the parotid gland-specific PSP promoters. The sequence is that of ETS-related transcription factor Elf-5 (ELF5) from Homo sapiens (Human).